Here is a 119-residue protein sequence, read N- to C-terminus: Phosphoribosyl-AMP cyclohydrolase (119 aa).

Residue Asp72 participates in Mg(2+) binding. Residue Cys73 coordinates Zn(2+). The Mg(2+) site is built by Asp74 and Asp76. Zn(2+) is bound by residues Cys89 and Cys96.

It belongs to the PRA-CH family. Homodimer. Requires Mg(2+) as cofactor. The cofactor is Zn(2+).

The protein localises to the cytoplasm. It carries out the reaction 1-(5-phospho-beta-D-ribosyl)-5'-AMP + H2O = 1-(5-phospho-beta-D-ribosyl)-5-[(5-phospho-beta-D-ribosylamino)methylideneamino]imidazole-4-carboxamide. It participates in amino-acid biosynthesis; L-histidine biosynthesis; L-histidine from 5-phospho-alpha-D-ribose 1-diphosphate: step 3/9. Functionally, catalyzes the hydrolysis of the adenine ring of phosphoribosyl-AMP. The chain is Phosphoribosyl-AMP cyclohydrolase from Methanocella arvoryzae (strain DSM 22066 / NBRC 105507 / MRE50).